A 380-amino-acid polypeptide reads, in one-letter code: Mitogen-activated protein kinase mpkC (380 aa).

The Protein kinase domain maps to 20–300; that stretch reads YVNLQPIGMG…AQDALRHPYL (281 aa). ATP-binding positions include 26-34 and Lys49; that span reads IGMGSFGLV. The active-site Proton acceptor is the Asp141. Residue Thr171 is modified to Phosphothreonine. The short motif at 171-173 is the TXY element; that stretch reads TGY. Phosphotyrosine is present on Tyr173.

This sequence belongs to the protein kinase superfamily. Ser/Thr protein kinase family. MAP kinase subfamily. HOG1 sub-subfamily. Requires Mg(2+) as cofactor. In terms of processing, dually phosphorylated on Thr-171 and Tyr-173, which activates the enzyme.

The enzyme catalyses L-seryl-[protein] + ATP = O-phospho-L-seryl-[protein] + ADP + H(+). It catalyses the reaction L-threonyl-[protein] + ATP = O-phospho-L-threonyl-[protein] + ADP + H(+). Its activity is regulated as follows. Activated by tyrosine and threonine phosphorylation. Functionally, mitogen-activated protein kinase required for growth on media where sorbitol or mannitol is the sole carbon source. The protein is Mitogen-activated protein kinase mpkC (mpkC) of Aspergillus clavatus (strain ATCC 1007 / CBS 513.65 / DSM 816 / NCTC 3887 / NRRL 1 / QM 1276 / 107).